Reading from the N-terminus, the 137-residue chain is Putative pre-16S rRNA nuclease (137 aa).

This sequence belongs to the YqgF nuclease family.

Its subcellular location is the cytoplasm. Could be a nuclease involved in processing of the 5'-end of pre-16S rRNA. This is Putative pre-16S rRNA nuclease from Anaeromyxobacter sp. (strain Fw109-5).